Here is a 375-residue protein sequence, read N- to C-terminus: Alpha-2,8-sialyltransferase 8B (375 aa).

Topologically, residues 1–6 (MQLQFR) are cytoplasmic. Residues 7–23 (SWMLAALTLLVVFLIFA) form a helical; Signal-anchor for type II membrane protein membrane-spanning segment. At 24–375 (DISEIEEEIG…LTVGQCDGAT (352 aa)) the chain is on the lumenal side. N-linked (GlcNAc...) asparagine glycans are attached at residues Asn-60, Asn-72, Asn-89, and Asn-134. 2 disulfides stabilise this stretch: Cys-157–Cys-307 and Cys-171–Cys-371. Residues Asn-162 and Asn-185 each contribute to the CMP-N-acetyl-beta-neuraminate site. N-linked (GlcNAc...) asparagine glycosylation is found at Asn-219 and Asn-234. Thr-294, Thr-295, Gly-296, Trp-316, Tyr-329, and His-330 together coordinate CMP-N-acetyl-beta-neuraminate. The Proton donor/acceptor role is filled by His-346.

It belongs to the glycosyltransferase 29 family. Post-translationally, autopolysialylated. Autopolysialylation is not a prerequisite for the polysialylation acitity, but enhances the polysialylation acitity.

The protein localises to the golgi apparatus membrane. The protein resides in the secreted. It is found in the cell membrane. The catalysed reaction is [N-acetyl-alpha-D-neuraminosyl-(2-&gt;8)](n) + CMP-N-acetyl-beta-neuraminate = [N-acetyl-alpha-D-neuraminosyl-(2-&gt;8)](n+1) + CMP + H(+). It participates in protein modification; protein glycosylation. Functionally, catalyzes the transfer of a sialic acid from a CMP-linked sialic acid donor onto a terminal alpha-2,3-, alpha-2,6-, or alpha-2,8-linked sialic acid of an N-linked glycan acceptor through alpha-2,8-linkages. Therefore, participates in polysialic acid synthesis on various sialylated N-acetyllactosaminyl oligosaccharides (alpha-2,3-, alpha-2,6-, or alpha-2,8-linked sialic acid), including NCAM1, NCAM1 N-glycans, FETUB N-glycans, and to a lesser extent sialylparagloboside (SPG) and AHSG, which does not require the initial addition of an alpha 2,8-sialic acid. However, does not exhibit sialic acid-polymerase activity. Catalyzes polysialic acid synthesis in the hippocampal on NCAM1 and supports neurite outgrowth. ST8SIA2-mediated polysialylation influences on oligodendrocyte differentiation and may promote the integrity of myelin and axons. The chain is Alpha-2,8-sialyltransferase 8B from Mus musculus (Mouse).